The following is a 609-amino-acid chain: Pentatricopeptide repeat-containing protein At1g03540 (609 aa).

PPR repeat units lie at residues 25 to 59 (SAPTKQSRILELCKLGQLTEAIRILNSTHSSEIPA), 60 to 94 (TPKLYASLLQTCNKVFSFIHGIQFHAHVVKSGLET), 95 to 126 (DRNVGNSLLSLYFKLGPGMRETRRVFDGRFVK), 127 to 161 (DAISWTSMMSGYVTGKEHVKALEVFVEMVSFGLDA), 162 to 196 (NEFTLSSAVKACSELGEVRLGRCFHGVVITHGFEW), 197 to 227 (NHFISSTLAYLYGVNREPVDARRVFDEMPEP), 228 to 263 (DVICWTAVLSAFSKNDLYEEALGLFYAMHRGKGLVP), 264 to 298 (DGSTFGTVLTACGNLRRLKQGKEIHGKLITNGIGS), 299 to 329 (NVVVESSLLDMYGKCGSVREARQVFNGMSKK), 330 to 364 (NSVSWSALLGGYCQNGEHEKAIEIFREMEEKDLYC), 396 to 426 (NVIVESALIDLYGKSGCIDSASRVYSKMSIR), 427 to 461 (NMITWNAMLSALAQNGRGEEAVSFFNDMVKKGIKP), 462 to 497 (DYISFIAILTACGHTGMVDEGRNYFVLMAKSYGIKP), and 498 to 532 (GTEHYSCMIDLLGRAGLFEEAENLLERAECRNDAS). The segment at 533–609 (LWGVLLGPCA…TVGQSWIDAH (77 aa)) is type E motif.

This sequence belongs to the PPR family. PCMP-E subfamily.

In Arabidopsis thaliana (Mouse-ear cress), this protein is Pentatricopeptide repeat-containing protein At1g03540 (PCMP-E4).